The primary structure comprises 502 residues: ATP synthase subunit alpha (502 aa).

Position 169–176 (169–176 (GDRQTGKT)) interacts with ATP.

This sequence belongs to the ATPase alpha/beta chains family. As to quaternary structure, F-type ATPases have 2 components, CF(1) - the catalytic core - and CF(0) - the membrane proton channel. CF(1) has five subunits: alpha(3), beta(3), gamma(1), delta(1), epsilon(1). CF(0) has three main subunits: a(1), b(2) and c(9-12). The alpha and beta chains form an alternating ring which encloses part of the gamma chain. CF(1) is attached to CF(0) by a central stalk formed by the gamma and epsilon chains, while a peripheral stalk is formed by the delta and b chains.

The protein localises to the cell inner membrane. It carries out the reaction ATP + H2O + 4 H(+)(in) = ADP + phosphate + 5 H(+)(out). Its function is as follows. Produces ATP from ADP in the presence of a proton gradient across the membrane. The alpha chain is a regulatory subunit. This Desulfovibrio desulfuricans (strain ATCC 27774 / DSM 6949 / MB) protein is ATP synthase subunit alpha.